Consider the following 44-residue polypeptide: Defensin-like protein 1 (44 aa).

A Pyrrolidone carboxylic acid modification is found at glutamine 1. Cysteines 15 and 36 form a disulfide.

Belongs to the DEFL family. Forms oligomers in its native state.

It is found in the secreted. Its function is as follows. Possesses antifungal activity sensitive to inorganic cations. The chain is Defensin-like protein 1 (AFP1) from Brassica napus (Rape).